Reading from the N-terminus, the 273-residue chain is Nitrogenase iron protein (273 aa).

8–15 (GKGGIGKS) is a binding site for ATP. A [4Fe-4S] cluster-binding site is contributed by cysteine 95. Position 98 is an ADP-ribosylarginine; by dinitrogenase reductase ADP-ribosyltransferase (arginine 98). Cysteine 130 provides a ligand contact to [4Fe-4S] cluster.

This sequence belongs to the NifH/BchL/ChlL family. In terms of assembly, homodimer. The cofactor is [4Fe-4S] cluster. In terms of processing, the reversible ADP-ribosylation of Arg-98 inactivates the nitrogenase reductase and regulates nitrogenase activity.

The catalysed reaction is N2 + 8 reduced [2Fe-2S]-[ferredoxin] + 16 ATP + 16 H2O = H2 + 8 oxidized [2Fe-2S]-[ferredoxin] + 2 NH4(+) + 16 ADP + 16 phosphate + 6 H(+). The key enzymatic reactions in nitrogen fixation are catalyzed by the nitrogenase complex, which has 2 components: the iron protein and the molybdenum-iron protein. The protein is Nitrogenase iron protein of Methanosarcina mazei (strain ATCC BAA-159 / DSM 3647 / Goe1 / Go1 / JCM 11833 / OCM 88) (Methanosarcina frisia).